The chain runs to 208 residues: Thymidylate kinase (208 aa).

10 to 17 (GLEGAGKS) provides a ligand contact to ATP.

This sequence belongs to the thymidylate kinase family.

The enzyme catalyses dTMP + ATP = dTDP + ADP. Functionally, phosphorylation of dTMP to form dTDP in both de novo and salvage pathways of dTTP synthesis. The sequence is that of Thymidylate kinase from Pseudoalteromonas translucida (strain TAC 125).